Reading from the N-terminus, the 503-residue chain is MTDIQNKNYIIALDQGTTSSRAIIFDRDANVVCTAQREFTQHYPQAGWVEHDPMEIFATQSAVMVEALAQAGLHHDQVAAIGITNQRETTVVWDKVTGRPIYNAIVWQCRRSTEIQICQQLKRDGHEQYINDTTGLVTDPYFSGTKLKWILDNVEGSRERARNGELLFGTIDSWLIWKFTGGKTHVTDYTNASRTMLFNIHTLEWDAKMLEILDVPREMLPEVKSSSEIYGRTKVASPSAAIAGDQQAALFGQMCVRGGQAKNTYGTGCFLLMNTGDKAVKSKHGMLTTIACGPRGEVAYALEGAVFNGGSTVQWLRDELKIIADATDTEYFAGKVKDSNGVYLVPAFTGLGAPYWDPYARGALFGLTRGVRVDHIIRAALESIAYQTRDVLDAMQQDSGERLKALRVDGGAVANNFLMQFQADILGTQVERPQMRETTALGAAYLAGLACGFWGSLEELRGKAVIEREFEPQLDEAAKEKLYAGWQKAVSRTRDWEPHEGAE.

Thr-17 is an ADP binding site. Thr-17, Thr-18, and Ser-19 together coordinate ATP. Position 17 (Thr-17) interacts with sn-glycerol 3-phosphate. Arg-21 is a binding site for ADP. The sn-glycerol 3-phosphate site is built by Arg-87, Glu-88, Tyr-141, and Asp-245. Arg-87, Glu-88, Tyr-141, Asp-245, and Gln-246 together coordinate glycerol. Residues Thr-267 and Gly-310 each coordinate ADP. ATP is bound by residues Thr-267, Gly-310, Gln-314, and Gly-411. Residues Gly-411 and Asn-415 each contribute to the ADP site.

It belongs to the FGGY kinase family.

The catalysed reaction is glycerol + ATP = sn-glycerol 3-phosphate + ADP + H(+). Its pathway is polyol metabolism; glycerol degradation via glycerol kinase pathway; sn-glycerol 3-phosphate from glycerol: step 1/1. Its activity is regulated as follows. Inhibited by fructose 1,6-bisphosphate (FBP). Functionally, key enzyme in the regulation of glycerol uptake and metabolism. Catalyzes the phosphorylation of glycerol to yield sn-glycerol 3-phosphate. This is Glycerol kinase from Pseudomonas tolaasii.